The primary structure comprises 661 residues: Zinc finger protein 81 (661 aa).

The 72-residue stretch at V21–S92 folds into the KRAB domain. K266 is covalently cross-linked (Glycyl lysine isopeptide (Lys-Gly) (interchain with G-Cter in SUMO2)). 12 C2H2-type zinc fingers span residues Y330–H352, Y358–H380, F386–H408, H414–H436, Y442–H464, Y470–H492, Y498–H520, Y526–H548, Y554–H576, Y582–H604, Y610–H632, and Y638–H660.

It belongs to the krueppel C2H2-type zinc-finger protein family.

It localises to the nucleus. In terms of biological role, may be involved in transcriptional regulation. The protein is Zinc finger protein 81 (ZNF81) of Homo sapiens (Human).